Reading from the N-terminus, the 165-residue chain is Putative pre-16S rRNA nuclease (165 aa).

Belongs to the YqgF nuclease family.

It is found in the cytoplasm. Could be a nuclease involved in processing of the 5'-end of pre-16S rRNA. In Beijerinckia indica subsp. indica (strain ATCC 9039 / DSM 1715 / NCIMB 8712), this protein is Putative pre-16S rRNA nuclease.